Consider the following 204-residue polypeptide: Large ribosomal subunit protein eL15 (204 aa).

It belongs to the eukaryotic ribosomal protein eL15 family. In terms of assembly, component of the large ribosomal subunit.

It localises to the cytoplasm. In terms of biological role, component of the large ribosomal subunit. The ribosome is a large ribonucleoprotein complex responsible for the synthesis of proteins in the cell. The sequence is that of Large ribosomal subunit protein eL15 (rpl15) from Silurus asotus (Amur catfish).